Reading from the N-terminus, the 161-residue chain is Regulator of ribonuclease activity A (161 aa).

Belongs to the RraA family. As to quaternary structure, homotrimer. Binds to both RNA-binding sites in the C-terminal region of Rne and to RhlB.

Its subcellular location is the cytoplasm. Its function is as follows. Globally modulates RNA abundance by binding to RNase E (Rne) and regulating its endonucleolytic activity. Can modulate Rne action in a substrate-dependent manner by altering the composition of the degradosome. Modulates RNA-binding and helicase activities of the degradosome. The protein is Regulator of ribonuclease activity A of Salmonella choleraesuis (strain SC-B67).